Reading from the N-terminus, the 145-residue chain is Small ribosomal subunit protein uS12A (145 aa).

Position 64 is a hydroxyproline (Pro64).

It belongs to the universal ribosomal protein uS12 family.

The polypeptide is Small ribosomal subunit protein uS12A (RPS23A) (Naumovozyma castellii (Yeast)).